A 70-amino-acid polypeptide reads, in one-letter code: MNFNLRGAVLANIAGNTQDQLQETIVDAIQSGEEKMLPGLGVLFEVIWKNADENERHDMLETLEQGLKNK.

It belongs to the SspI family.

It localises to the spore core. The protein is Small, acid-soluble spore protein I of Bacillus cytotoxicus (strain DSM 22905 / CIP 110041 / 391-98 / NVH 391-98).